The sequence spans 911 residues: DNA ligase 4 (911 aa).

12 residues coordinate ATP: Glu271, Thr272, Lys273, Leu274, Arg278, Glu331, Lys345, Phe367, Glu427, Lys432, Lys449, and Lys451. The active-site N6-AMP-lysine intermediate is Lys273. Position 331 (Glu331) interacts with Mg(2+). Glu427 lines the Mg(2+) pocket. The tract at residues 610–620 is required for catalytic activity; that stretch reads LASKHLYIGGD. BRCT domains lie at 654–743 and 808–911; these read KISN…PRFM and SPLS…QYLI.

Belongs to the ATP-dependent DNA ligase family. In terms of assembly, interacts with XRCC4; the LIG4-XRCC4 subcomplex has a 1:2 stoichiometry and XRCC4 is required for LIG4 stability. Component of the core long-range non-homologous end joining (NHEJ) complex (also named DNA-PK complex) composed of PRKDC, LIG4, XRCC4, XRCC6/Ku70, XRCC5/Ku86 and NHEJ1/XLF. Additional component of the NHEJ complex includes PAXX. Following autophosphorylation, PRKDC dissociates from DNA, leading to formation of the short-range NHEJ complex, composed of LIG4, XRCC4, XRCC6/Ku70, XRCC5/Ku86 and NHEJ1/XLF. Interacts with DCLRE1C; the interaction is direct. Interacts with APLF. Mg(2+) serves as cofactor. In terms of tissue distribution, testis, thymus, prostate and heart.

The protein localises to the nucleus. It catalyses the reaction ATP + (deoxyribonucleotide)n-3'-hydroxyl + 5'-phospho-(deoxyribonucleotide)m = (deoxyribonucleotide)n+m + AMP + diphosphate.. DNA ligase involved in DNA non-homologous end joining (NHEJ); required for double-strand break (DSB) repair and V(D)J recombination. Catalyzes the NHEJ ligation step of the broken DNA during DSB repair by resealing the DNA breaks after the gap filling is completed. Joins single-strand breaks in a double-stranded polydeoxynucleotide in an ATP-dependent reaction. LIG4 is mechanistically flexible: it can ligate nicks as well as compatible DNA overhangs alone, while in the presence of XRCC4, it can ligate ends with 2-nucleotides (nt) microhomology and 1-nt gaps. Forms a subcomplex with XRCC4; the LIG4-XRCC4 subcomplex is responsible for the NHEJ ligation step and XRCC4 enhances the joining activity of LIG4. Binding of the LIG4-XRCC4 complex to DNA ends is dependent on the assembly of the DNA-dependent protein kinase complex DNA-PK to these DNA ends. LIG4 regulates nuclear localization of XRCC4. The sequence is that of DNA ligase 4 from Homo sapiens (Human).